A 298-amino-acid polypeptide reads, in one-letter code: Tyrosine recombinase XerC (298 aa).

The region spanning 2 to 88 is the Core-binding (CB) domain; sequence TDLHTDVERY…ALRSFFDWLV (87 aa). Residues 109 to 288 form the Tyr recombinase domain; the sequence is HLPKNIDVDD…DFQHLASVYD (180 aa). Residues Arg148, Lys172, His240, Arg243, and His266 contribute to the active site. Catalysis depends on Tyr275, which acts as the O-(3'-phospho-DNA)-tyrosine intermediate.

This sequence belongs to the 'phage' integrase family. XerC subfamily. As to quaternary structure, forms a cyclic heterotetrameric complex composed of two molecules of XerC and two molecules of XerD, in which XerC interacts with XerD via its C-terminal region, XerD interacts with XerC via its C-terminal region and so on.

Its subcellular location is the cytoplasm. FtsK may regulate the catalytic switch between XerC and XerD in the heterotetrameric complex during the two steps of the recombination process. Its function is as follows. Site-specific tyrosine recombinase, which acts by catalyzing the cutting and rejoining of the recombining DNA molecules. Binds cooperatively to specific DNA consensus sequences that are separated from XerD binding sites by a short central region, forming the heterotetrameric XerC-XerD complex that recombines DNA substrates. The complex is essential to convert dimers of the bacterial chromosome into monomers to permit their segregation at cell division. It also contributes to the segregational stability of plasmids. In the complex XerC specifically exchanges the top DNA strands. The sequence is that of Tyrosine recombinase XerC from Escherichia coli O157:H7.